Consider the following 234-residue polypeptide: Orotidine 5'-phosphate decarboxylase (234 aa).

Residues Asp-11, Lys-33, Asp-60–Thr-69, Thr-120, Arg-181, Gln-190, Gly-210, and Arg-211 each bind substrate. Lys-62 (proton donor) is an active-site residue.

It belongs to the OMP decarboxylase family. Type 1 subfamily. In terms of assembly, homodimer.

It catalyses the reaction orotidine 5'-phosphate + H(+) = UMP + CO2. The protein operates within pyrimidine metabolism; UMP biosynthesis via de novo pathway; UMP from orotate: step 2/2. In terms of biological role, catalyzes the decarboxylation of orotidine 5'-monophosphate (OMP) to uridine 5'-monophosphate (UMP). This is Orotidine 5'-phosphate decarboxylase from Shewanella sediminis (strain HAW-EB3).